The primary structure comprises 737 residues: Disintegrin and metalloproteinase domain-containing protein 2 (737 aa).

A signal peptide spans Met1–Ser18. A propeptide spanning residues Glu19–Arg180 is cleaved from the precursor. Residues Glu19–Arg688 are Extracellular-facing. N-linked (GlcNAc...) asparagine glycosylation is found at Asn128 and Asn226. A Peptidase M12B domain is found at His184–Pro381. 4 disulfide bridges follow: Cys293–Cys376, Cys335–Cys360, Cys337–Cys342, and Cys450–Cys470. 4 N-linked (GlcNAc...) asparagine glycosylation sites follow: Asn359, Asn464, Asn491, and Asn571. In terms of domain architecture, Disintegrin spans Met389–Asp478. An EGF-like domain is found at Leu617 to Lys650. 3 cysteine pairs are disulfide-bonded: Cys621/Cys632, Cys626/Cys638, and Cys640/Cys649. A helical membrane pass occupies residues Trp689–Val709. The Cytoplasmic segment spans residues Lys710–Asp737. Ser731 is modified (phosphoserine).

In terms of assembly, heterodimer with ADAM1/fertilin subunit alpha. In terms of processing, the prodomain and the metalloprotease domain are cleaved during the epididymal maturation of the spermatozoa.

The protein localises to the membrane. In terms of biological role, sperm surface membrane protein that may be involved in sperm-egg plasma membrane adhesion and fusion during fertilization. Could have a direct role in sperm-zona binding or migration of sperm from the uterus into the oviduct. Interactions with egg membrane could be mediated via binding between its disintegrin-like domain to one or more integrins receptors on the egg. This is a non catalytic metalloprotease-like protein. The sequence is that of Disintegrin and metalloproteinase domain-containing protein 2 (Adam2) from Rattus norvegicus (Rat).